Here is a 449-residue protein sequence, read N- to C-terminus: 3-phosphoshikimate 1-carboxyvinyltransferase (449 aa).

Residues 1–30 (MSHDSSPQPLTAAPGAPLRGRLRPPGDKSI) are disordered. Lys-28, Ser-29, and Arg-33 together coordinate 3-phosphoshikimate. A phosphoenolpyruvate-binding site is contributed by Lys-28. Positions 101 and 129 each coordinate phosphoenolpyruvate. Positions 175, 177, 330, and 357 each coordinate 3-phosphoshikimate. Gln-177 contributes to the phosphoenolpyruvate binding site. Residue Asp-330 is the Proton acceptor of the active site. Positions 361 and 405 each coordinate phosphoenolpyruvate.

The protein belongs to the EPSP synthase family. Monomer.

The protein localises to the cytoplasm. The catalysed reaction is 3-phosphoshikimate + phosphoenolpyruvate = 5-O-(1-carboxyvinyl)-3-phosphoshikimate + phosphate. The protein operates within metabolic intermediate biosynthesis; chorismate biosynthesis; chorismate from D-erythrose 4-phosphate and phosphoenolpyruvate: step 6/7. In terms of biological role, catalyzes the transfer of the enolpyruvyl moiety of phosphoenolpyruvate (PEP) to the 5-hydroxyl of shikimate-3-phosphate (S3P) to produce enolpyruvyl shikimate-3-phosphate and inorganic phosphate. In Methylobacterium radiotolerans (strain ATCC 27329 / DSM 1819 / JCM 2831 / NBRC 15690 / NCIMB 10815 / 0-1), this protein is 3-phosphoshikimate 1-carboxyvinyltransferase.